Here is a 487-residue protein sequence, read N- to C-terminus: Glutamate--tRNA ligase 2 (487 aa).

The short motif at 31–41 is the 'HIGH' region element; that stretch reads PSPTGHLHVGG. Positions 254–258 match the 'KMSKS' region motif; the sequence is PLSKR. Lysine 257 is a binding site for ATP.

It belongs to the class-I aminoacyl-tRNA synthetase family. Glutamate--tRNA ligase type 1 subfamily. As to quaternary structure, monomer.

The protein resides in the cytoplasm. It catalyses the reaction tRNA(Glu) + L-glutamate + ATP = L-glutamyl-tRNA(Glu) + AMP + diphosphate. Catalyzes the attachment of glutamate to tRNA(Glu) in a two-step reaction: glutamate is first activated by ATP to form Glu-AMP and then transferred to the acceptor end of tRNA(Glu). This chain is Glutamate--tRNA ligase 2, found in Thermotoga maritima (strain ATCC 43589 / DSM 3109 / JCM 10099 / NBRC 100826 / MSB8).